We begin with the raw amino-acid sequence, 458 residues long: MTRDVRQLFGTDGVRGRANFEPMTVETSVLLGKAIAGVLLEKHAGKHRVVVGKDTRLSGYMFENALIAGLTSMGIETLMLGPIPTPGVAFITRAYRADAGIMISASHNPYRDNGIKIFSSDGFKIGQAVEERIEAMVASKDFGKLPDDHAVGKNKRVKDATGRYIEYAKATFPKGRTLKGLRIVLDCAHGATYRVAPSVFEELDAEVICYGCEPSGCNINAGCGALWPSTIQKAVIEHKADVGIALDGDGDRLIMVDEKGHIVDGDMLLSICASDLKRRQALSDNRVVATVMTNFGVLRYLESLGIQVTISPVGDRHVLQHMLENQAVLGGEQSGHMIFLDYNTTGDGIVSALQVLRIMIESESTLSDLTACIAKSPQALINVPVTKKVPLESLANVQGVLKEVKEVLGDSGRILLRYSGTENICRVMVEGTKKHQVDSLAKTIVDVVEAEIGAEISE.

The active-site Phosphoserine intermediate is the S106. 4 residues coordinate Mg(2+): S106, D247, D249, and D251. S106 bears the Phosphoserine mark.

Belongs to the phosphohexose mutase family. Requires Mg(2+) as cofactor. In terms of processing, activated by phosphorylation.

It catalyses the reaction alpha-D-glucosamine 1-phosphate = D-glucosamine 6-phosphate. Its function is as follows. Catalyzes the conversion of glucosamine-6-phosphate to glucosamine-1-phosphate. This is Phosphoglucosamine mutase from Chlamydia trachomatis serovar D (strain ATCC VR-885 / DSM 19411 / UW-3/Cx).